The primary structure comprises 605 residues: Poly [ADP-ribose] polymerase 2-B (605 aa).

The tract at residues 96 to 122 (NAAAAAAVTDGGDQDKTKSAKDDDGDD) is disordered. A compositionally biased stretch (basic and acidic residues) spans 108-122 (DQDKTKSAKDDDGDD). One can recognise a WGR domain in the interval 153–260 (AYHVLQVGDE…TKLETRTASF (108 aa)). One can recognise a PARP alpha-helical domain in the interval 250–370 (ETKLETRTAS…EIEIAIKLLE (121 aa)). The region spanning 378 to 605 (HPLYARYKQF…NVNFNFKRWG (228 aa)) is the PARP catalytic domain.

Belongs to the ARTD/PARP family.

It localises to the nucleus. It catalyses the reaction NAD(+) + (ADP-D-ribosyl)n-acceptor = nicotinamide + (ADP-D-ribosyl)n+1-acceptor + H(+).. It carries out the reaction L-aspartyl-[protein] + NAD(+) = 4-O-(ADP-D-ribosyl)-L-aspartyl-[protein] + nicotinamide. The catalysed reaction is L-glutamyl-[protein] + NAD(+) = 5-O-(ADP-D-ribosyl)-L-glutamyl-[protein] + nicotinamide. Involved in the base excision repair (BER) pathway, by catalyzing the poly(ADP-ribosyl)ation of a limited number of acceptor proteins involved in chromatin architecture and in DNA metabolism. This modification follows DNA damages and appears as an obligatory step in a detection/signaling pathway leading to the reparation of DNA strand breaks. This chain is Poly [ADP-ribose] polymerase 2-B (PARP2-B), found in Oryza sativa subsp. japonica (Rice).